Consider the following 454-residue polypeptide: MASRIVQQQQARGEAVVGGGKQQKKNGVADGRNRKALGDIGNLANVRGVVDAKPNRPITRSFGAQLLANAQAAAAADNSKRQACANVAGPPAVANEGVAVAKRAAPKPVSKKVIVKPKPSEKVTDIDASPDKKEVLKDKKKEGDANPKKKSQHTLTSVLTARSKAACGITNKPKEQIIDIDASDVDNELAAVEYIDDIYKFYKLVENESRPHDYIGSQPEINERMRAILVDWLIDVHTKFELSLETLYLTINIIDRFLAVKTVPRRELQLVGISAMLMASKYEEIWPPEVNDFVCLSDRAYTHEHILTMEKTILNKLEWTLTVPTPLVFLVRFIKASVPDQELDNMAHFLSELGMMNYATLMYCPSMVAASAVLAARCTLNKAPFWNETLKLHTGYSQEQLMDCARLLVGFYSTLENGKLRVVYRKYSDPQKGAVAVLPPAKFLLPEGSASQHS.

The segment covering 1–11 (MASRIVQQQQA) has biased composition (polar residues). Disordered regions lie at residues 1 to 35 (MASR…RNRK) and 108 to 155 (PVSK…QHTL). A compositionally biased stretch (basic and acidic residues) spans 118–147 (KPSEKVTDIDASPDKKEVLKDKKKEGDANP).

It belongs to the cyclin family. Cyclin AB subfamily. As to quaternary structure, interacts with the CDC2 protein kinase to form a serine/threonine kinase holoenzyme complex also known as maturation promoting factor (MPF). The cyclin subunit imparts substrate specificity to the complex.

Essential for the control of the cell cycle at the G2/M (mitosis) transition. The protein is G2/mitotic-specific cyclin S13-6 of Glycine max (Soybean).